The sequence spans 163 residues: Cytochrome c-type biogenesis protein CcmE (163 aa).

Topologically, residues 1–8 (MNPRRKKR) are cytoplasmic. A helical; Signal-anchor for type II membrane protein transmembrane segment spans residues 9-29 (LTIILAISAGLAAVIGLVLYA). Residues 30 to 163 (LSQNIDLFYT…TEAQLKGAKQ (134 aa)) lie on the Periplasmic side of the membrane. Heme contacts are provided by His-131 and Tyr-135.

The protein belongs to the CcmE/CycJ family.

It localises to the cell inner membrane. Functionally, heme chaperone required for the biogenesis of c-type cytochromes. Transiently binds heme delivered by CcmC and transfers the heme to apo-cytochromes in a process facilitated by CcmF and CcmH. The polypeptide is Cytochrome c-type biogenesis protein CcmE (Aeromonas salmonicida (strain A449)).